Here is a 440-residue protein sequence, read N- to C-terminus: UDP-N-acetylglucosamine 1-carboxyvinyltransferase (440 aa).

22–23 (KN) provides a ligand contact to phosphoenolpyruvate. R102 contacts UDP-N-acetyl-alpha-D-glucosamine. C126 serves as the catalytic Proton donor. C126 is subject to 2-(S-cysteinyl)pyruvic acid O-phosphothioketal. UDP-N-acetyl-alpha-D-glucosamine contacts are provided by residues 131-135 (RPVDQ), D320, and I342.

This sequence belongs to the EPSP synthase family. MurA subfamily.

It localises to the cytoplasm. It carries out the reaction phosphoenolpyruvate + UDP-N-acetyl-alpha-D-glucosamine = UDP-N-acetyl-3-O-(1-carboxyvinyl)-alpha-D-glucosamine + phosphate. Its pathway is cell wall biogenesis; peptidoglycan biosynthesis. Its function is as follows. Cell wall formation. Adds enolpyruvyl to UDP-N-acetylglucosamine. This chain is UDP-N-acetylglucosamine 1-carboxyvinyltransferase, found in Acidovorax ebreus (strain TPSY) (Diaphorobacter sp. (strain TPSY)).